A 64-amino-acid polypeptide reads, in one-letter code: Large ribosomal subunit protein bL35 (64 aa).

The disordered stretch occupies residues 1-23 (MPKMKTHRGAAKRFKKTKNKIKR).

The protein belongs to the bacterial ribosomal protein bL35 family.

The sequence is that of Large ribosomal subunit protein bL35 from Nitratiruptor sp. (strain SB155-2).